Consider the following 349-residue polypeptide: N-acetyltaurine hydrolase (349 aa).

6 residues coordinate a divalent metal cation: His-26, His-28, Glu-169, His-201, His-230, and Asp-298.

The protein belongs to the metallo-dependent hydrolases superfamily. Phosphotriesterase family. It depends on a divalent metal cation as a cofactor.

Its subcellular location is the cytoplasm. It localises to the cytosol. The catalysed reaction is N-acetyltaurine + H2O = taurine + acetate. It catalyses the reaction N-propanoyltaurine + H2O = propanoate + taurine. The enzyme catalyses N-acetyl-L-methionine + H2O = L-methionine + acetate. It carries out the reaction N-acetyl-L-isoleucine + H2O = L-isoleucine + acetate. The catalysed reaction is N-acetyl-L-leucine + H2O = L-leucine + acetate. It catalyses the reaction N-acetyl-L-valine + H2O = L-valine + acetate. Its function is as follows. N-acetyltaurine hydrolase that catalyzes the hydrolysis of N-acetyltaurine into taurine and acetate. PTER also acts on other N-acetyl amino acids (Met, Ile, Leu, Val) and N-propionyltaurine, but at lower rates. This is N-acetyltaurine hydrolase (pter) from Xenopus tropicalis (Western clawed frog).